An 853-amino-acid chain; its full sequence is DNA mismatch repair protein MutS (853 aa).

G614 to S621 serves as a coordination point for ATP.

It belongs to the DNA mismatch repair MutS family.

This protein is involved in the repair of mismatches in DNA. It is possible that it carries out the mismatch recognition step. This protein has a weak ATPase activity. This chain is DNA mismatch repair protein MutS, found in Shigella dysenteriae serotype 1 (strain Sd197).